A 119-amino-acid chain; its full sequence is Neuropeptide B (119 aa).

A signal peptide spans M1–A21. Residues S53 to A119 constitute a propeptide that is removed on maturation.

This sequence belongs to the neuropeptide B/W family. As to expression, detected in a variety of tissues. High levels are found in the lymphoid organs, central nervous system, mammary gland and uterus.

Its subcellular location is the secreted. In terms of biological role, may be involved in the regulation of feeding, neuroendocrine system, memory and learning. May be involved in the afferent pain pathway. The sequence is that of Neuropeptide B (Npb) from Rattus norvegicus (Rat).